The primary structure comprises 523 residues: Sodium-dependent lysophosphatidylcholine symporter 1-B (523 aa).

Residues 1 to 34 lie on the Cytoplasmic side of the membrane; that stretch reads MAKGEGAEQYTNTSLLQKPSPDEVKLAKHETKSR. Residues 35–64 form a helical membrane-spanning segment; that stretch reads LSVCSKLCYAIGGAPYQITGCAIGFFLQIY. The Extracellular portion of the chain corresponds to 65 to 75; it reads LLDVALLDPFY. A helical membrane pass occupies residues 76–96; the sequence is ASIILFVGRAWDAVTDPTVGF. Over 97-108 the chain is Cytoplasmic; it reads LVSRTPWTRFGR. A helical transmembrane segment spans residues 109–128; it reads MMPWIVLSTPFAVLCYFLIW. Topologically, residues 129-138 are extracellular; sequence YVPSVDQGKV. The chain crosses the membrane as a helical span at residues 139-163; sequence VWYLIFYCCFQTLQTCFHVPYSALT. Residues 164 to 170 are Cytoplasmic-facing; it reads MFISTEQ. The chain crosses the membrane as a helical span at residues 171–202; it reads KERDSATAYRMTVEVLGTLIGTAIQGQIVGMA. At 203-226 the chain is on the extracellular side; that stretch reads NAPCISTEIDLNSTGLEVAPDVNI. Cysteines 206 and 457 form a disulfide. Asn214 and Asn225 each carry an N-linked (GlcNAc...) asparagine glycan. The chain crosses the membrane as a helical span at residues 227 to 260; the sequence is TDPHVSLQDLRNAYMIASGVICAIYVVCAVVLFL. The Cytoplasmic segment spans residues 261–290; that stretch reads GVKEQKDTCRVRTEPMSFFQGICMVMGHGP. A helical membrane pass occupies residues 291-317; it reads YAKLVMGFLFTSLAFMLLEGNFALFCI. At 318–328 the chain is on the extracellular side; that stretch reads YNLGFRNDFQN. A helical membrane pass occupies residues 329 to 347; sequence VLLVIMLSATLAIPFWQWF. The Cytoplasmic segment spans residues 348 to 351; the sequence is LTKF. Residues 352-373 form a helical membrane-spanning segment; it reads GKKTAVYIGTTSVVPFLISVVL. The Extracellular segment spans residues 374–376; the sequence is VPS. A helical transmembrane segment spans residues 377–413; sequence SLAVTYIASFAAGVSVAAAFLLPWSMLPDVVDDFKVQ. The Cytoplasmic portion of the chain corresponds to 414 to 423; the sequence is NPESQGHEAI. Residues 424 to 450 traverse the membrane as a helical segment; it reads FYSFYVFFTKFASGVSLGVSTLSLDFA. The Extracellular segment spans residues 451–462; sequence GYVTRGCTQPGE. A helical membrane pass occupies residues 463-486; sequence VKLTLKILVSAAPIVLIIIGLLIF. Residues 487–523 lie on the Cytoplasmic side of the membrane; that stretch reads ISYPINEEKRQGNRKLLNEQRENEMDSETDSTELNVV. The tract at residues 504-523 is disordered; that stretch reads NEQRENEMDSETDSTELNVV.

It belongs to the major facilitator superfamily. Expressed in the developing nervous system.

It localises to the cell membrane. The protein localises to the endoplasmic reticulum membrane. It catalyses the reaction a 1-acyl-sn-glycero-3-phosphocholine(in) + Na(+)(in) = a 1-acyl-sn-glycero-3-phosphocholine(out) + Na(+)(out). The enzyme catalyses 1-(4Z,7Z,10Z,13Z,16Z,19Z-docosahexaenoyl)-sn-glycero-3-phosphocholine(in) + Na(+)(in) = 1-(4Z,7Z,10Z,13Z,16Z,19Z-docosahexaenoyl)-sn-glycero-3-phosphocholine(out) + Na(+)(out). It carries out the reaction 1-(9Z-octadecenoyl)-sn-glycero-3-phosphocholine(in) + Na(+)(in) = 1-(9Z-octadecenoyl)-sn-glycero-3-phosphocholine(out) + Na(+)(out). The catalysed reaction is 1-hexadecanoyl-sn-glycero-3-phosphocholine(in) + Na(+)(in) = 1-hexadecanoyl-sn-glycero-3-phosphocholine(out) + Na(+)(out). It catalyses the reaction a 1-acyl-sn-glycero-3-phosphoethanolamine(in) + Na(+)(in) = a 1-acyl-sn-glycero-3-phosphoethanolamine(out) + Na(+)(out). In terms of biological role, sodium-dependent lysophosphatidylcholine (LPC) symporter, which plays an essential role for blood-brain barrier formation and function. Specifically expressed in endothelium of the blood-brain barrier of micro-vessels and transports LPC into the brain. Transport of LPC is essential because it constitutes the major mechanism by which docosahexaenoic acid (DHA), an omega-3 fatty acid that is essential for normal brain growth and cognitive function, enters the brain. Transports LPC carrying long-chain fatty acids such LPC oleate and LPC palmitate with a minimum acyl chain length of 14 carbons. Does not transport docosahexaenoic acid in unesterified fatty acid. This Danio rerio (Zebrafish) protein is Sodium-dependent lysophosphatidylcholine symporter 1-B (mfsd2ab).